We begin with the raw amino-acid sequence, 383 residues long: S-adenosylmethionine synthase (383 aa).

Histidine 15 provides a ligand contact to ATP. Aspartate 17 is a Mg(2+) binding site. Glutamate 43 lines the K(+) pocket. Residues glutamate 56 and glutamine 99 each contribute to the L-methionine site. Residues 99–109 (QSPDINQGVDR) form a flexible loop region. ATP is bound by residues 164–166 (DAK), 230–231 (RF), aspartate 239, 245–246 (RK), alanine 262, and lysine 266. Aspartate 239 provides a ligand contact to L-methionine. Lysine 270 provides a ligand contact to L-methionine.

The protein belongs to the AdoMet synthase family. In terms of assembly, homotetramer; dimer of dimers. Mg(2+) serves as cofactor. The cofactor is K(+).

Its subcellular location is the cytoplasm. The enzyme catalyses L-methionine + ATP + H2O = S-adenosyl-L-methionine + phosphate + diphosphate. It participates in amino-acid biosynthesis; S-adenosyl-L-methionine biosynthesis; S-adenosyl-L-methionine from L-methionine: step 1/1. Its function is as follows. Catalyzes the formation of S-adenosylmethionine (AdoMet) from methionine and ATP. The overall synthetic reaction is composed of two sequential steps, AdoMet formation and the subsequent tripolyphosphate hydrolysis which occurs prior to release of AdoMet from the enzyme. In Pseudoalteromonas translucida (strain TAC 125), this protein is S-adenosylmethionine synthase.